A 504-amino-acid chain; its full sequence is Arabinose import ATP-binding protein AraG (504 aa).

ABC transporter domains lie at 8–243 and 256–499; these read LSFR…MVGR and YGEE…MPKV. 40-47 lines the ATP pocket; it reads GENGAGKS.

This sequence belongs to the ABC transporter superfamily. Arabinose importer (TC 3.A.1.2.2) family. The complex is composed of two ATP-binding proteins (AraG), two transmembrane proteins (AraH) and a solute-binding protein (AraF).

It localises to the cell inner membrane. The enzyme catalyses L-arabinose(out) + ATP + H2O = L-arabinose(in) + ADP + phosphate + H(+). Part of the ABC transporter complex AraFGH involved in arabinose import. Responsible for energy coupling to the transport system. This Escherichia coli O157:H7 protein is Arabinose import ATP-binding protein AraG.